Reading from the N-terminus, the 197-residue chain is Imidazoleglycerol-phosphate dehydratase (197 aa).

The protein belongs to the imidazoleglycerol-phosphate dehydratase family.

The protein localises to the cytoplasm. It carries out the reaction D-erythro-1-(imidazol-4-yl)glycerol 3-phosphate = 3-(imidazol-4-yl)-2-oxopropyl phosphate + H2O. Its pathway is amino-acid biosynthesis; L-histidine biosynthesis; L-histidine from 5-phospho-alpha-D-ribose 1-diphosphate: step 6/9. This Erythrobacter litoralis (strain HTCC2594) protein is Imidazoleglycerol-phosphate dehydratase.